The chain runs to 301 residues: Cuticle collagen 2 (301 aa).

An N-terminal signal peptide occupies residues 1 to 37; it reads MDIDARIKAYKFVAYSAVTFSVVAVVSVFITLPMVYN. 4 triple-helical region regions span residues 105 to 134, 153 to 176, 183 to 212, and 215 to 282; these read GPPGPGGSPGKPGKPGKPGAPGAPGNPGKG, GPPGPAGPAGPPGPPGPDGNPGSP, GPAGPPGPAGPAGNDGAPGAPGGPGEPGAS, and GGPG…KGIC. The interval 109 to 284 is disordered; that stretch reads PGGSPGKPGK…GEGEKGICPK (176 aa). Pro residues-rich tracts occupy residues 143-170 and 179-191; these read TQPPCQPCPGGPPGPAGPAGPPGPPGPD and PSGPGPAGPPGPA. Residues 201-218 show a composition bias toward gly residues; it reads GAPGGPGEPGASEQGGPG. Over residues 219–229 the composition is skewed to pro residues; the sequence is EPGPAGPPGPA. Low complexity predominate over residues 252 to 261; the sequence is PGAAGAPGAD. Residues 262-274 are compositionally biased toward gly residues; the sequence is GNPGGPGTAGKPG.

It belongs to the cuticular collagen family. Collagen polypeptide chains are complexed within the cuticle by disulfide bonds and other types of covalent cross-links. Syncytial dorsal and ventral epidermis.

Nematode cuticles are composed largely of collagen-like proteins. The cuticle functions both as an exoskeleton and as a barrier to protect the worm from its environment. The sequence is that of Cuticle collagen 2 (col-2) from Caenorhabditis elegans.